A 291-amino-acid polypeptide reads, in one-letter code: 4-hydroxy-tetrahydrodipicolinate synthase (291 aa).

Thr42 provides a ligand contact to pyruvate. Tyr129 functions as the Proton donor/acceptor in the catalytic mechanism. Lys157 serves as the catalytic Schiff-base intermediate with substrate. A pyruvate-binding site is contributed by Ile198.

The protein belongs to the DapA family. As to quaternary structure, homotetramer; dimer of dimers.

It localises to the cytoplasm. It catalyses the reaction L-aspartate 4-semialdehyde + pyruvate = (2S,4S)-4-hydroxy-2,3,4,5-tetrahydrodipicolinate + H2O + H(+). Its pathway is amino-acid biosynthesis; L-lysine biosynthesis via DAP pathway; (S)-tetrahydrodipicolinate from L-aspartate: step 3/4. Its function is as follows. Catalyzes the condensation of (S)-aspartate-beta-semialdehyde [(S)-ASA] and pyruvate to 4-hydroxy-tetrahydrodipicolinate (HTPA). This chain is 4-hydroxy-tetrahydrodipicolinate synthase, found in Chlamydia pneumoniae (Chlamydophila pneumoniae).